Here is a 112-residue protein sequence, read N- to C-terminus: Putative transmembrane protein ORF112 (112 aa).

The next 3 membrane-spanning stretches (helical) occupy residues 26 to 46 (FWEVICIYYFALQGSFLGILV), 50 to 70 (ILVTTLPLLPPALFFYLMYLF), and 80 to 100 (IFFPSLDPILIPILIFFLVGV).

The protein localises to the host membrane. In Acidianus convivator (ABV), this protein is Putative transmembrane protein ORF112.